The following is a 516-amino-acid chain: Anaerobic nitric oxide reductase transcription regulator NorR (516 aa).

Asp-57 is modified (4-aspartylphosphate). The Sigma-54 factor interaction domain occupies 187-416 (IIGLSAPMLQ…LEHAIHRAVV (230 aa)). ATP is bound by residues 215–222 (GETGTGKE) and 278–287 (ADNGTLFLDE). A DNA-binding region (H-T-H motif) is located at residues 482–501 (WAATARALELDVANLHRLAK).

It functions in the pathway nitrogen metabolism; nitric oxide reduction. Required for the expression of anaerobic nitric oxide (NO) reductase, acts as a transcriptional activator for at least the norVW operon. Activation also requires sigma-54. The chain is Anaerobic nitric oxide reductase transcription regulator NorR from Klebsiella pneumoniae (strain 342).